Reading from the N-terminus, the 261-residue chain is 3-methyl-2-oxobutanoate hydroxymethyltransferase (261 aa).

Residues D42 and D81 each coordinate Mg(2+). 3-methyl-2-oxobutanoate-binding positions include 42 to 43 (DS), D81, and K110. Position 112 (E112) interacts with Mg(2+). The Proton acceptor role is filled by E179.

This sequence belongs to the PanB family. As to quaternary structure, homodecamer; pentamer of dimers. It depends on Mg(2+) as a cofactor.

The protein resides in the cytoplasm. It carries out the reaction 3-methyl-2-oxobutanoate + (6R)-5,10-methylene-5,6,7,8-tetrahydrofolate + H2O = 2-dehydropantoate + (6S)-5,6,7,8-tetrahydrofolate. Its pathway is cofactor biosynthesis; (R)-pantothenate biosynthesis; (R)-pantoate from 3-methyl-2-oxobutanoate: step 1/2. Functionally, catalyzes the reversible reaction in which hydroxymethyl group from 5,10-methylenetetrahydrofolate is transferred onto alpha-ketoisovalerate to form ketopantoate. This is 3-methyl-2-oxobutanoate hydroxymethyltransferase from Thermus thermophilus (strain ATCC 27634 / DSM 579 / HB8).